We begin with the raw amino-acid sequence, 416 residues long: Serine--tRNA ligase (416 aa).

232–234 (TAE) contributes to the L-serine binding site. 263–265 (RKE) is a binding site for ATP. An L-serine-binding site is contributed by E286. 350–353 (EISS) provides a ligand contact to ATP. S384 lines the L-serine pocket.

It belongs to the class-II aminoacyl-tRNA synthetase family. Type-1 seryl-tRNA synthetase subfamily. In terms of assembly, homodimer. The tRNA molecule binds across the dimer.

The protein resides in the cytoplasm. It catalyses the reaction tRNA(Ser) + L-serine + ATP = L-seryl-tRNA(Ser) + AMP + diphosphate + H(+). The catalysed reaction is tRNA(Sec) + L-serine + ATP = L-seryl-tRNA(Sec) + AMP + diphosphate + H(+). It functions in the pathway aminoacyl-tRNA biosynthesis; selenocysteinyl-tRNA(Sec) biosynthesis; L-seryl-tRNA(Sec) from L-serine and tRNA(Sec): step 1/1. Its function is as follows. Catalyzes the attachment of serine to tRNA(Ser). Is also able to aminoacylate tRNA(Sec) with serine, to form the misacylated tRNA L-seryl-tRNA(Sec), which will be further converted into selenocysteinyl-tRNA(Sec). The protein is Serine--tRNA ligase of Nautilia profundicola (strain ATCC BAA-1463 / DSM 18972 / AmH).